The chain runs to 73 residues: Hypotensin-like peptide (73 aa).

The N-terminal stretch at 1 to 25 (MKMMIAIVFVSILLLMFSLSSTAMG) is a signal peptide.

In terms of tissue distribution, expressed by the venom gland.

It is found in the secreted. Its function is as follows. May potentiate the hypotensive effect of bradykinin. In Tityus serrulatus (Brazilian scorpion), this protein is Hypotensin-like peptide.